Here is a 336-residue protein sequence, read N- to C-terminus: Ferredoxin--NADP reductase (336 aa).

Aspartate 37, glutamine 45, tyrosine 50, valine 90, phenylalanine 124, aspartate 286, and threonine 327 together coordinate FAD.

It belongs to the ferredoxin--NADP reductase type 2 family. Homodimer. Requires FAD as cofactor.

The enzyme catalyses 2 reduced [2Fe-2S]-[ferredoxin] + NADP(+) + H(+) = 2 oxidized [2Fe-2S]-[ferredoxin] + NADPH. This Enterococcus faecalis (strain ATCC 700802 / V583) protein is Ferredoxin--NADP reductase.